A 367-amino-acid polypeptide reads, in one-letter code: Dihydroxyacetone phosphate transaminase Cj1437c (367 aa).

N6-(pyridoxal phosphate)lysine is present on Lys-219.

This sequence belongs to the class-II pyridoxal-phosphate-dependent aminotransferase family. It depends on pyridoxal 5'-phosphate as a cofactor.

It carries out the reaction dihydroxyacetone phosphate + L-glutamate = (S)-serinol phosphate + 2-oxoglutarate. It functions in the pathway capsule biogenesis; capsule polysaccharide biosynthesis. Functionally, pyridoxal phosphate (PLP)-dependent transaminase involved in the biosynthesis of amidated D-glucuronic acid structures found on the capsular polysaccharide (CPS) of C.jejuni. Catalyzes the transamination of dihydroxyacetone phosphate (DHAP) to (S)-serinol phosphate in the presence of L-glutamate. Less active with L-aspartate. No activity with dihydroxyacetone or L-alanine. This chain is Dihydroxyacetone phosphate transaminase Cj1437c, found in Campylobacter jejuni subsp. jejuni serotype O:2 (strain ATCC 700819 / NCTC 11168).